The following is a 134-amino-acid chain: DNA-binding protein inhibitor ID-2 (134 aa).

Ser14 and Ser25 each carry phosphoserine. In terms of domain architecture, bHLH spans 23 to 75; it reads SRSKTPVDDPMSLLYNMNDCYSKLKELVPSIPQNKKVTKMEILQHVIDYILDL. Positions 30–83 are interaction with IFI204; the sequence is DDPMSLLYNMNDCYSKLKELVPSIPQNKKVTKMEILQHVIDYILDLQIALDSHP. The short motif at 106–115 is the Nuclear export signal element; the sequence is LNTDISILSL.

Interacts with GATA4 and NKX2-5. Interacts with NR0B2. Interacts with CLOCK and BMAL1. Interacts with IFI204. Interacts with NEDD9/HEF1. Interacts with ASB4; this interaction promotes ID2 proteasomal degradation. Post-translationally, polyubiquitinated; which is favored by Ifi204 and leads to proteasomal degradation. Ubiquitinated in a ASB4-depedent manner, leading to proteasomal degradation. In terms of processing, phosphorylated in vitro by CDK1, PKA and PKC.

The protein resides in the cytoplasm. It localises to the nucleus. Functionally, transcriptional regulator (lacking a basic DNA binding domain) which negatively regulates the basic helix-loop-helix (bHLH) transcription factors by forming heterodimers and inhibiting their DNA binding and transcriptional activity. Implicated in regulating a variety of cellular processes, including cellular growth, senescence, differentiation, apoptosis, angiogenesis, and neoplastic transformation. Inhibits skeletal muscle and cardiac myocyte differentiation. Regulates the circadian clock by repressing the transcriptional activator activity of the CLOCK-BMAL1 heterodimer. Restricts the CLOCK and BMAL1 localization to the cytoplasm. Plays a role in both the input and output pathways of the circadian clock: in the input component, is involved in modulating the magnitude of photic entrainment and in the output component, contributes to the regulation of a variety of liver clock-controlled genes involved in lipid metabolism. This chain is DNA-binding protein inhibitor ID-2 (Id2), found in Mus musculus (Mouse).